The following is a 206-amino-acid chain: Ribosomal RNA small subunit methyltransferase G (206 aa).

S-adenosyl-L-methionine-binding positions include glycine 74, leucine 79, 125–126 (VE), and arginine 140.

It belongs to the methyltransferase superfamily. RNA methyltransferase RsmG family.

It localises to the cytoplasm. It catalyses the reaction guanosine(527) in 16S rRNA + S-adenosyl-L-methionine = N(7)-methylguanosine(527) in 16S rRNA + S-adenosyl-L-homocysteine. Specifically methylates the N7 position of guanine in position 527 of 16S rRNA. In Shewanella putrefaciens (strain CN-32 / ATCC BAA-453), this protein is Ribosomal RNA small subunit methyltransferase G.